Consider the following 378-residue polypeptide: UPF0754 membrane protein BCE33L0760 (378 aa).

The next 2 helical transmembrane spans lie at Met1–Thr21 and Tyr357–Leu377.

Belongs to the UPF0754 family.

It localises to the cell membrane. This is UPF0754 membrane protein BCE33L0760 from Bacillus cereus (strain ZK / E33L).